Consider the following 101-residue polypeptide: Small ribosomal subunit protein uS14 (101 aa).

It belongs to the universal ribosomal protein uS14 family. Part of the 30S ribosomal subunit. Contacts proteins S3 and S10.

In terms of biological role, binds 16S rRNA, required for the assembly of 30S particles and may also be responsible for determining the conformation of the 16S rRNA at the A site. The polypeptide is Small ribosomal subunit protein uS14 (Beijerinckia indica subsp. indica (strain ATCC 9039 / DSM 1715 / NCIMB 8712)).